The following is a 99-amino-acid chain: Cell division protein FtsB (99 aa).

The Cytoplasmic segment spans residues 1–3 (MKF). Residues 4-21 (FVIALIVLLGLLQYRLWS) traverse the membrane as a helical segment. Residues 22–99 (GDNSLPEYFV…GDRSVSSPSQ (78 aa)) are Periplasmic-facing. The stretch at 31–73 (VLQKQIAAQQEGNAKLNERNQVLKEEIIDLKSGTEAIEERARN) forms a coiled coil.

The protein belongs to the FtsB family. Part of a complex composed of FtsB, FtsL and FtsQ.

It is found in the cell inner membrane. Functionally, essential cell division protein. May link together the upstream cell division proteins, which are predominantly cytoplasmic, with the downstream cell division proteins, which are predominantly periplasmic. This chain is Cell division protein FtsB, found in Shewanella sp. (strain ANA-3).